We begin with the raw amino-acid sequence, 213 residues long: Orotate phosphoribosyltransferase (213 aa).

Lysine 26 provides a ligand contact to 5-phospho-alpha-D-ribose 1-diphosphate. 34–35 (FF) lines the orotate pocket. 5-phospho-alpha-D-ribose 1-diphosphate is bound by residues 72 to 73 (YK), arginine 99, lysine 100, lysine 103, histidine 105, and 124 to 132 (DDVITAGTA). Orotate contacts are provided by threonine 128 and arginine 156.

The protein belongs to the purine/pyrimidine phosphoribosyltransferase family. PyrE subfamily. Homodimer. Requires Mg(2+) as cofactor.

The enzyme catalyses orotidine 5'-phosphate + diphosphate = orotate + 5-phospho-alpha-D-ribose 1-diphosphate. Its pathway is pyrimidine metabolism; UMP biosynthesis via de novo pathway; UMP from orotate: step 1/2. Catalyzes the transfer of a ribosyl phosphate group from 5-phosphoribose 1-diphosphate to orotate, leading to the formation of orotidine monophosphate (OMP). This chain is Orotate phosphoribosyltransferase, found in Shigella sonnei (strain Ss046).